A 201-amino-acid polypeptide reads, in one-letter code: Small ribosomal subunit protein uS4c (201 aa).

The 64-residue stretch at 89–152 (MRLDNILFRL…NSRTLVQNLL (64 aa)) folds into the S4 RNA-binding domain.

Belongs to the universal ribosomal protein uS4 family. As to quaternary structure, part of the 30S ribosomal subunit. Contacts protein S5. The interaction surface between S4 and S5 is involved in control of translational fidelity.

It is found in the plastid. Its subcellular location is the chloroplast. Its function is as follows. One of the primary rRNA binding proteins, it binds directly to 16S rRNA where it nucleates assembly of the body of the 30S subunit. Functionally, with S5 and S12 plays an important role in translational accuracy. This chain is Small ribosomal subunit protein uS4c (rps4), found in Olimarabidopsis pumila (Dwarf rocket).